Reading from the N-terminus, the 164-residue chain is Large ribosomal subunit protein bL17 (164 aa).

Residues 127-164 (RARTDSVPARKGAGKKDASRVSGTVPDGQSQKIGKKKE) form a disordered region.

This sequence belongs to the bacterial ribosomal protein bL17 family. As to quaternary structure, part of the 50S ribosomal subunit. Contacts protein L32.

The polypeptide is Large ribosomal subunit protein bL17 (Treponema pallidum (strain Nichols)).